A 329-amino-acid polypeptide reads, in one-letter code: Malate dehydrogenase (329 aa).

12 to 18 (GAAGQIC) serves as a coordination point for NAD(+). The substrate site is built by Arg-95 and Arg-101. NAD(+)-binding positions include Asn-108, Gln-115, and 132-134 (VGN). Positions 134 and 165 each coordinate substrate. Residue His-190 is the Proton acceptor of the active site.

It belongs to the LDH/MDH superfamily. MDH type 2 family. In terms of assembly, homodimer.

It carries out the reaction (S)-malate + NAD(+) = oxaloacetate + NADH + H(+). Functionally, catalyzes the reversible oxidation of malate to oxaloacetate. The polypeptide is Malate dehydrogenase (Aquaspirillum arcticum).